Here is a 306-residue protein sequence, read N- to C-terminus: Curved DNA-binding protein (306 aa).

One can recognise a J domain in the interval 5 to 69; the sequence is DYYAIMGVKP…QRRAEYDQLW (65 aa).

The protein localises to the cytoplasm. It is found in the nucleoid. Functionally, DNA-binding protein that preferentially recognizes a curved DNA sequence. It is probably a functional analog of DnaJ; displays overlapping activities with DnaJ, but functions under different conditions, probably acting as a molecular chaperone in an adaptive response to environmental stresses other than heat shock. Lacks autonomous chaperone activity; binds native substrates and targets them for recognition by DnaK. Its activity is inhibited by the binding of CbpM. The polypeptide is Curved DNA-binding protein (Salmonella choleraesuis (strain SC-B67)).